The following is a 342-amino-acid chain: UDP-N-acetylglucosamine--N-acetylmuramyl-(pentapeptide) pyrophosphoryl-undecaprenol N-acetylglucosamine transferase (342 aa).

Residues 10–12 (TGG), Asn124, Ser177, and Gln275 each bind UDP-N-acetyl-alpha-D-glucosamine.

The protein belongs to the glycosyltransferase 28 family. MurG subfamily.

It localises to the cell inner membrane. It carries out the reaction di-trans,octa-cis-undecaprenyl diphospho-N-acetyl-alpha-D-muramoyl-L-alanyl-D-glutamyl-meso-2,6-diaminopimeloyl-D-alanyl-D-alanine + UDP-N-acetyl-alpha-D-glucosamine = di-trans,octa-cis-undecaprenyl diphospho-[N-acetyl-alpha-D-glucosaminyl-(1-&gt;4)]-N-acetyl-alpha-D-muramoyl-L-alanyl-D-glutamyl-meso-2,6-diaminopimeloyl-D-alanyl-D-alanine + UDP + H(+). It functions in the pathway cell wall biogenesis; peptidoglycan biosynthesis. In terms of biological role, cell wall formation. Catalyzes the transfer of a GlcNAc subunit on undecaprenyl-pyrophosphoryl-MurNAc-pentapeptide (lipid intermediate I) to form undecaprenyl-pyrophosphoryl-MurNAc-(pentapeptide)GlcNAc (lipid intermediate II). The protein is UDP-N-acetylglucosamine--N-acetylmuramyl-(pentapeptide) pyrophosphoryl-undecaprenol N-acetylglucosamine transferase of Campylobacter jejuni (strain RM1221).